The chain runs to 502 residues: Glycerol kinase (502 aa).

T14 lines the ADP pocket. ATP-binding residues include T14, T15, and S16. T14 serves as a coordination point for sn-glycerol 3-phosphate. R18 provides a ligand contact to ADP. The sn-glycerol 3-phosphate site is built by R84, E85, Y136, and D246. Positions 84, 85, 136, 246, and 247 each coordinate glycerol. The ADP site is built by T268 and G311. ATP is bound by residues T268, G311, Q315, and G412. 2 residues coordinate ADP: G412 and N416.

The protein belongs to the FGGY kinase family. As to quaternary structure, homotetramer and homodimer (in equilibrium). Heterodimer with EIIA-Glc. Binds 1 zinc ion per glycerol kinase EIIA-Glc dimer. The zinc ion is important for dimerization.

It catalyses the reaction glycerol + ATP = sn-glycerol 3-phosphate + ADP + H(+). The protein operates within polyol metabolism; glycerol degradation via glycerol kinase pathway; sn-glycerol 3-phosphate from glycerol: step 1/1. With respect to regulation, activity of this regulatory enzyme is affected by several metabolites. Allosterically and non-competitively inhibited by fructose 1,6-bisphosphate (FBP) and unphosphorylated phosphocarrier protein EIIA-Glc (III-Glc), an integral component of the bacterial phosphotransferase (PTS) system. Its function is as follows. Key enzyme in the regulation of glycerol uptake and metabolism. Catalyzes the phosphorylation of glycerol to yield sn-glycerol 3-phosphate. This Salmonella arizonae (strain ATCC BAA-731 / CDC346-86 / RSK2980) protein is Glycerol kinase.